The chain runs to 206 residues: Small ribosomal subunit protein uS4 (206 aa).

Positions 15–46 (MGENIWGRPKSPVNKREYGPGQHGQRRKNKLS) are disordered. The region spanning 94–154 (RRLDAIVYRA…EKSRQLALVL (61 aa)) is the S4 RNA-binding domain.

The protein belongs to the universal ribosomal protein uS4 family. In terms of assembly, part of the 30S ribosomal subunit. Contacts protein S5. The interaction surface between S4 and S5 is involved in control of translational fidelity.

Functionally, one of the primary rRNA binding proteins, it binds directly to 16S rRNA where it nucleates assembly of the body of the 30S subunit. In terms of biological role, with S5 and S12 plays an important role in translational accuracy. This chain is Small ribosomal subunit protein uS4, found in Cereibacter sphaeroides (strain ATCC 17029 / ATH 2.4.9) (Rhodobacter sphaeroides).